A 264-amino-acid chain; its full sequence is tRNA pseudouridine synthase A (264 aa).

The active-site Nucleophile is the D51. Residue Y109 coordinates substrate.

This sequence belongs to the tRNA pseudouridine synthase TruA family. As to quaternary structure, homodimer.

The catalysed reaction is uridine(38/39/40) in tRNA = pseudouridine(38/39/40) in tRNA. Formation of pseudouridine at positions 38, 39 and 40 in the anticodon stem and loop of transfer RNAs. In Pseudoalteromonas translucida (strain TAC 125), this protein is tRNA pseudouridine synthase A.